Reading from the N-terminus, the 219-residue chain is Uracil-DNA glycosylase (219 aa).

Catalysis depends on aspartate 61, which acts as the Proton acceptor.

Belongs to the uracil-DNA glycosylase (UDG) superfamily. UNG family.

The protein localises to the cytoplasm. The enzyme catalyses Hydrolyzes single-stranded DNA or mismatched double-stranded DNA and polynucleotides, releasing free uracil.. Excises uracil residues from the DNA which can arise as a result of misincorporation of dUMP residues by DNA polymerase or due to deamination of cytosine. The polypeptide is Uracil-DNA glycosylase (Haemophilus influenzae (strain PittEE)).